We begin with the raw amino-acid sequence, 1235 residues long: DNA polymerase catalytic subunit (1235 aa).

Disordered regions lie at residues 640-691 (QGRF…ETAG) and 1098-1134 (AAAPGDEPAPPAALPSPAKRPRETPSPADPPGGASKP). Residues 650–661 (APKRPAAAREDE) show a composition bias toward basic and acidic residues. The span at 662–675 (ERPEEEGEDEDERE) shows a compositional bias: acidic residues. A compositionally biased stretch (basic and acidic residues) spans 676–691 (EGGGEREPDGARETAG).

Belongs to the DNA polymerase type-B family. Forms a complex with the ssDNA-binding protein UL29, the DNA polymerase processivity factor, and the alkaline exonuclease. Interacts with the putative helicase-primase complex subunit UL8; this interaction may coordinate leading and lagging strand DNA synthesis at the replication fork.

The protein localises to the host nucleus. The enzyme catalyses DNA(n) + a 2'-deoxyribonucleoside 5'-triphosphate = DNA(n+1) + diphosphate. The catalysed reaction is Endonucleolytic cleavage to 5'-phosphomonoester.. Functionally, replicates viral genomic DNA. The replication complex is composed of six viral proteins: the DNA polymerase, processivity factor, primase, primase-associated factor, helicase, and ssDNA-binding protein. Additionally, the polymerase contains an intrinsic ribonuclease H (RNase H) activity that specifically degrades RNA/DNA heteroduplexes or duplex DNA substrates in the 5' to 3' direction. Therefore, it can catalyze the excision of the RNA primers that initiate the synthesis of Okazaki fragments at a replication fork during viral DNA replication. This is DNA polymerase catalytic subunit from Homo sapiens (Human).